The chain runs to 568 residues: Urease subunit alpha (568 aa).

Residues 132-568 (GAIDTHVHYI…LPLAQLYNLF (437 aa)) enclose the Urease domain. Residues histidine 137, histidine 139, and lysine 219 each coordinate Ni(2+). The residue at position 219 (lysine 219) is an N6-carboxylysine. A substrate-binding site is contributed by histidine 221. Positions 248 and 274 each coordinate Ni(2+). The active-site Proton donor is the histidine 322. Ni(2+) is bound at residue aspartate 362.

The protein belongs to the metallo-dependent hydrolases superfamily. Urease alpha subunit family. Heterotrimer of UreA (gamma), UreB (beta) and UreC (alpha) subunits. Three heterotrimers associate to form the active enzyme. The cofactor is Ni cation. Carboxylation allows a single lysine to coordinate two nickel ions.

It is found in the cytoplasm. It carries out the reaction urea + 2 H2O + H(+) = hydrogencarbonate + 2 NH4(+). The protein operates within nitrogen metabolism; urea degradation; CO(2) and NH(3) from urea (urease route): step 1/1. The sequence is that of Urease subunit alpha from Azobacteroides pseudotrichonymphae genomovar. CFP2.